A 546-amino-acid chain; its full sequence is Undecaprenyl phosphate-alpha-4-amino-4-deoxy-L-arabinose arabinosyl transferase (546 aa).

The next 12 membrane-spanning stretches (helical) occupy residues 6–26 (INLA…PLGL), 87–107 (AASA…VGRF), 113–133 (AWVT…GTYS), 177–197 (LLTK…PFMI), 208–228 (WGWW…LAIH), 260–280 (YYLP…PSAI), 289–309 (SPLL…FSAA), 313–333 (LVTY…QGII), 345–365 (IGSV…IVLF), 380–400 (PWLL…SIKA), 410–430 (YMLM…NISI), and 450–467 (AILI…NWYF).

Belongs to the glycosyltransferase 83 family.

It localises to the cell inner membrane. The enzyme catalyses 4-amino-4-deoxy-alpha-L-arabinopyranosyl di-trans,octa-cis-undecaprenyl phosphate + lipid IVA = lipid IIA + di-trans,octa-cis-undecaprenyl phosphate.. Its pathway is lipopolysaccharide metabolism; 4-amino-4-deoxy-beta-L-arabinose-lipid A biosynthesis. Its function is as follows. Catalyzes the transfer of the L-Ara4N moiety of the glycolipid undecaprenyl phosphate-alpha-L-Ara4N to lipid A. The modified arabinose is attached to lipid A and is required for resistance to polymyxin and cationic antimicrobial peptides. The chain is Undecaprenyl phosphate-alpha-4-amino-4-deoxy-L-arabinose arabinosyl transferase from Shewanella sediminis (strain HAW-EB3).